Consider the following 94-residue polypeptide: Small ribosomal subunit protein uS19 (94 aa).

The protein belongs to the universal ribosomal protein uS19 family.

Its function is as follows. Protein S19 forms a complex with S13 that binds strongly to the 16S ribosomal RNA. This Buchnera aphidicola subsp. Cinara cedri (strain Cc) protein is Small ribosomal subunit protein uS19.